A 326-amino-acid polypeptide reads, in one-letter code: Ig gamma-1 chain C region (326 aa).

Residues 1–97 are CH1; that stretch reads AETTAPSVYP…ASSTKVDKKI (97 aa). The cysteines at positions 27 and 82 are disulfide-linked. The interval 98-112 is hinge; it reads VPRNCGGDCKPCICT. Residues 113–219 form a CH2 region; the sequence is GSEVSSVFIF…PIEKTISKPE (107 aa). Cystine bridges form between Cys-140-Cys-200 and Cys-246-Cys-304. N-linked (GlcNAc...) asparagine glycosylation is present at Asn-176. Residues 220 to 326 are CH3; that stretch reads GRTQVPHVYT…EKSLSHSPGK (107 aa).

This is Ig gamma-1 chain C region from Rattus norvegicus (Rat).